The chain runs to 300 residues: Ribosomal RNA small subunit methyltransferase H (300 aa).

S-adenosyl-L-methionine-binding positions include 36–38, D55, L89, D103, and Q110; that span reads GGH.

It belongs to the methyltransferase superfamily. RsmH family.

Its subcellular location is the cytoplasm. It carries out the reaction cytidine(1402) in 16S rRNA + S-adenosyl-L-methionine = N(4)-methylcytidine(1402) in 16S rRNA + S-adenosyl-L-homocysteine + H(+). Functionally, specifically methylates the N4 position of cytidine in position 1402 (C1402) of 16S rRNA. The chain is Ribosomal RNA small subunit methyltransferase H from Thermotoga neapolitana (strain ATCC 49049 / DSM 4359 / NBRC 107923 / NS-E).